Here is a 436-residue protein sequence, read N- to C-terminus: Diaminobutyrate--2-oxoglutarate transaminase (436 aa).

Position 269 is an N6-(pyridoxal phosphate)lysine (lysine 269).

Belongs to the class-III pyridoxal-phosphate-dependent aminotransferase family. It depends on pyridoxal 5'-phosphate as a cofactor.

The catalysed reaction is L-2,4-diaminobutanoate + 2-oxoglutarate = L-aspartate 4-semialdehyde + L-glutamate. It participates in amine and polyamine biosynthesis; ectoine biosynthesis; L-ectoine from L-aspartate 4-semialdehyde: step 1/3. In terms of biological role, catalyzes reversively the conversion of L-aspartate beta-semialdehyde (ASA) to L-2,4-diaminobutyrate (DABA) by transamination with L-glutamate. This is Diaminobutyrate--2-oxoglutarate transaminase (ectB) from Nocardia farcinica (strain IFM 10152).